Here is a 277-residue protein sequence, read N- to C-terminus: Insulin-induced gene 1 protein (277 aa).

Residues 1–84 (MPRLHDHFWS…PYPNTWHHRL (84 aa)) are Cytoplasmic-facing. The span at 51 to 66 (HGAPDADPAPRGRSAA) shows a compositional bias: low complexity. The disordered stretch occupies residues 51–73 (HGAPDADPAPRGRSAAMSGPEPG). The helical transmembrane segment at 85 to 107 (LQRSLVLFSVGVVLALVLNLLQI) threads the bilayer. Residues 108 to 126 (QRNVTLFPEEVIATIFSSA) are Lumenal-facing. A helical transmembrane segment spans residues 127–144 (WWVPPCCGTAAAVVGLLY). Residues 145-159 (PCIDSHLGEPHKFKR) lie on the Cytoplasmic side of the membrane. Residues K156 and K158 each participate in a glycyl lysine isopeptide (Lys-Gly) (interchain with G-Cter in ubiquitin) cross-link. A helical transmembrane segment spans residues 160 to 182 (EWASVMRCIAVFVGINHASAKLD). At 183-185 (FAN) the chain is on the lumenal side. The helical transmembrane segment at 186 to 204 (NVQLSLTLAALSLGLWWTF) threads the bilayer. Residues 205-209 (DRSRS) are Cytoplasmic-facing. S207 bears the Phosphoserine; by PCK1 mark. A helical membrane pass occupies residues 210–231 (GLGLGITIAFLATLITQFLVYN). The Lumenal segment spans residues 232–245 (GVYQYTSPDFLYIR). A helical transmembrane segment spans residues 246–263 (SWLPCIFFSGGVTVGNIG). Topologically, residues 264–277 (RQLAMGVPEKPHSD) are cytoplasmic. A KxHxx motif is present at residues 271-277 (PEKPHSD).

This sequence belongs to the INSIG family. In terms of assembly, interacts with SCAP; interaction is direct and only takes place in the presence of sterols; it prevents interaction between SCAP and the coat protein complex II (COPII). Associates with the SCAP-SREBP complex (composed of SCAP and SREBF1/SREBP1 or SREBF2/SREBP2); association is mediated via its interaction with SCAP and only takes place in the presence of sterols. Interaction with SCAP is mutually exclusive with PAQR3. Interacts with HMGCR (via its SSD); the interaction, accelerated by sterols, leads to the recruitment of HMGCR to AMFR/gp78 for its ubiquitination by the sterol-mediated ERAD pathway. Interacts with AMFR/gp78 (via its membrane domain); the interaction recruits HMCR at the ER membrane for its ubiquitination and degradation by the sterol-mediated ERAD pathway. Interacts with SOAT2/ACAT2; leading to promote recruitment of AMFR/gp78 and subsequent ubiquitination of SOAT2/ACAT2. Interacts with RNF139. Interacts with RNF145. In terms of processing, phosphorylation at Ser-207 by PCK1 reduces binding to oxysterol, disrupting the interaction between INSIG1 and SCAP, thereby promoting nuclear translocation of SREBP proteins (SREBF1/SREBP1 or SREBF2/SREBP2) and subsequent transcription of downstream lipogenesis-related genes. Post-translationally, ubiquitinated by AMFR/gp78 in response to sterol deprivation, leading to its degradation: when the SCAP-SREBP complex becomes dissociated from INSIG1, INSIG1 is then ubiquitinated and degraded in proteasomes. Although ubiquitination is required for rapid INSIG1 degradation, it is not required for release of the SCAP-SREBP complex. Ubiquitinated by RNF139. In terms of tissue distribution, expressed in all tissues tested with highest expression in the liver.

The protein resides in the endoplasmic reticulum membrane. Its function is as follows. Oxysterol-binding protein that mediates feedback control of cholesterol synthesis by controlling both endoplasmic reticulum to Golgi transport of SCAP and degradation of HMGCR. Acts as a negative regulator of cholesterol biosynthesis by mediating the retention of the SCAP-SREBP complex in the endoplasmic reticulum, thereby blocking the processing of sterol regulatory element-binding proteins (SREBPs) SREBF1/SREBP1 and SREBF2/SREBP2. Binds oxysterol, including 25-hydroxycholesterol, regulating interaction with SCAP and retention of the SCAP-SREBP complex in the endoplasmic reticulum. In presence of oxysterol, interacts with SCAP, retaining the SCAP-SREBP complex in the endoplasmic reticulum, thereby preventing SCAP from escorting SREBF1/SREBP1 and SREBF2/SREBP2 to the Golgi. Sterol deprivation or phosphorylation by PCK1 reduce oxysterol-binding, disrupting the interaction between INSIG1 and SCAP, thereby promoting Golgi transport of the SCAP-SREBP complex, followed by processing and nuclear translocation of SREBF1/SREBP1 and SREBF2/SREBP2. Also regulates cholesterol synthesis by regulating degradation of HMGCR: initiates the sterol-mediated ubiquitin-mediated endoplasmic reticulum-associated degradation (ERAD) of HMGCR via recruitment of the reductase to the ubiquitin ligases AMFR/gp78 and/or RNF139. Also regulates degradation of SOAT2/ACAT2 when the lipid levels are low: initiates the ubiquitin-mediated degradation of SOAT2/ACAT2 via recruitment of the ubiquitin ligases AMFR/gp78. This is Insulin-induced gene 1 protein from Homo sapiens (Human).